The following is a 172-amino-acid chain: RNA silencing suppressor p19 (172 aa).

Residues 1–20 (MERAIQGNDAREQANSERWD) are compositionally biased toward basic and acidic residues. Residues 1 to 38 (MERAIQGNDAREQANSERWDGGSGSSTSPFQLPDESPS) form a disordered region.

Belongs to the tombusvirus protein p19 family. As to quaternary structure, homodimer.

Functionally, viral suppressor of RNA silencing which binds specifically to silencing RNAs (siRNAs). Acts as a molecular caliper to specifically select siRNAs based on the length of the duplex region of the RNA. The chain is RNA silencing suppressor p19 from Tomato bushy stunt virus (strain type) (TBSV).